Consider the following 975-residue polypeptide: Nesprin-3 (975 aa).

At 1-925 (MTQQPQDDFD…LGSLFRRACC (925 aa)) the chain is on the cytoplasmic side. A Spectrin 1 repeat occupies 220–325 (REHEEYQAGV…WEEEEERLRG (106 aa)). A coiled-coil region spans residues 617–645 (NHQHKMDQLSSDFQALQRSLEDLVDRCRQ). One copy of the Spectrin 2 repeat lies at 647–740 (VQEHCTFSHQ…RELAESWRAL (94 aa)). The KASH domain occupies 917–975 (GSLFRRACCVALPLQLLLLLFLLLLFLLPIREEDRSCTLANNFARSFTLMLRYNGPPPT). Residues 926–946 (VALPLQLLLLLFLLLLFLLPI) form a helical; Anchor for type IV membrane protein membrane-spanning segment. At 947–975 (REEDRSCTLANNFARSFTLMLRYNGPPPT) the chain is on the perinuclear space side.

It belongs to the nesprin family. As to quaternary structure, core component of LINC complexes which are composed of inner nuclear membrane SUN domain-containing proteins coupled to outer nuclear membrane KASH domain-containing nesprins. SUN and KASH domain-containing proteins seem to bind each other promiscuously; however, differentially expression of LINC complex constituents can give rise to specific assemblies. Interacts with SUN1 and SUN2; probably forming respective LINC complexes. Interacts with PLEC (via actin-binding domain). Interacts with DST. Interacts with SYNE1 via spectrin repeats. Interacts (via KASH domain) with TOR1A (ATP-bound); the interaction is required for SYNE3 nuclear envelope localization. Post-translationally, the disulfid bond with SUN1 or SUN2 is required for stability of the respective LINC complex under tensile forces. In terms of tissue distribution, expressed in aortic endothelial cells (at protein level).

It is found in the nucleus outer membrane. The protein resides in the nucleus envelope. Its subcellular location is the rough endoplasmic reticulum. Functionally, as a component of the LINC (LInker of Nucleoskeleton and Cytoskeleton) complex involved in the connection between the nuclear lamina and the cytoskeleton. The nucleocytoplasmic interactions established by the LINC complex play an important role in the transmission of mechanical forces across the nuclear envelope and in nuclear movement and positioning. Probable anchoring protein which tethers the nucleus to the cytoskeleton by binding PLEC which can associate with the intermediate filament system. Plays a role in the regulation of aortic epithelial cell morphology, and is required for flow-induced centrosome polarization and directional migration in aortic endothelial cells. The polypeptide is Nesprin-3 (Homo sapiens (Human)).